Reading from the N-terminus, the 292-residue chain is MQFSGALTAIVTPLKNGHIDEEAYRNLIEWQIEQGINGLVPCGTTGESATLSHEEHRDVIRICIDQVKGRVPVLAGAGSNSTKEACGLAQFAKDAGADGALLITPYYNKPTQEGLYQHFKAIAAEVSMPYIMYNVPGRTGVNMTSETVARVKRDVPEVVGIKEASANLKQVSEIIEFCGPDFQVLSGDDFTVLPLLSVGGCGVISVVSNIVPAKMSGLCKAFAGGDLARAKTLHHELSPLSRAMFCETNPIPVKTALSMMGRLSLELRLPLVPMQPQNEKYLRGILSLAGLV.

T45 contacts pyruvate. Y133 serves as the catalytic Proton donor/acceptor. The Schiff-base intermediate with substrate role is filled by K162. Residue I204 coordinates pyruvate.

The protein belongs to the DapA family. Homotetramer; dimer of dimers.

The protein resides in the cytoplasm. The catalysed reaction is L-aspartate 4-semialdehyde + pyruvate = (2S,4S)-4-hydroxy-2,3,4,5-tetrahydrodipicolinate + H2O + H(+). Its pathway is amino-acid biosynthesis; L-lysine biosynthesis via DAP pathway; (S)-tetrahydrodipicolinate from L-aspartate: step 3/4. In terms of biological role, catalyzes the condensation of (S)-aspartate-beta-semialdehyde [(S)-ASA] and pyruvate to 4-hydroxy-tetrahydrodipicolinate (HTPA). The polypeptide is 4-hydroxy-tetrahydrodipicolinate synthase (Oleidesulfovibrio alaskensis (strain ATCC BAA-1058 / DSM 17464 / G20) (Desulfovibrio alaskensis)).